The chain runs to 373 residues: NAD(P)H-quinone oxidoreductase subunit 1 (373 aa).

8 consecutive transmembrane segments (helical) span residues 28-48 (LLWLPLPMLLVLVAAVVGVLV), 98-118 (LLFTLGPVLVVVPVIISWLII), 129-149 (VGVGIFLWISFSSIQPIGLLM), 177-197 (LALAVLAIVMMTNSLSTVDIV), 205-225 (ILSWNIWRQPVGFLIFWICAL), 267-287 (VLSAVLVSVLYLGGWGFPIPV), 309-329 (TVGIVMTVLKAYLLVFVAILL), and 348-368 (FLLPLSLVNLLVTAALKLAFP).

Belongs to the complex I subunit 1 family. As to quaternary structure, NDH-1 is composed of at least 11 different subunits.

Its subcellular location is the cellular thylakoid membrane. The enzyme catalyses a plastoquinone + NADH + (n+1) H(+)(in) = a plastoquinol + NAD(+) + n H(+)(out). It carries out the reaction a plastoquinone + NADPH + (n+1) H(+)(in) = a plastoquinol + NADP(+) + n H(+)(out). In terms of biological role, NDH-1 shuttles electrons from an unknown electron donor, via FMN and iron-sulfur (Fe-S) centers, to quinones in the respiratory and/or the photosynthetic chain. The immediate electron acceptor for the enzyme in this species is believed to be plastoquinone. Couples the redox reaction to proton translocation, and thus conserves the redox energy in a proton gradient. This is NAD(P)H-quinone oxidoreductase subunit 1 from Synechococcus sp. (strain CC9605).